Consider the following 439-residue polypeptide: MSTQIPARQETYDPSQSSGTKTPSHPYDGNPTRSYPKRNAGKFTTYSSQMIAPRKRKAWEYEEEEYEASRDFYQRVTSWYDGAVDLAPQLFREQHFPSYDEFYSLGGVNEKFLEAHEEVKAQEQMDSRYLQHGQLPSINMGKQPIIGVIYGPTGSGKSHLLRALISCNMLDPIPETVIFITPEKNMIPPIEQTSWNLQLVEANFDCREDGTIAPKTSTFRPEFMEMTYEEATAPEHLNIDHPDNIYVKVSKRGPVAIIMDECMDKLCSGSSVSVLFHALPSKLFARSAHCTAFYIFVVLHNMAPRTAIGNVPTLKVNAKMHILSCHIPQFQFARFLYAFAHNISKDLVVLLKAYFSFLQQNQRFSWVMYTPDPVSESFRWCSIDQQYSIIPLNVNIQERFLKTAKSIIKFSETHRKQLERNPKLTDLEKLSPPGTFQET.

Over residues 1–23 (MSTQIPARQETYDPSQSSGTKTP) the composition is skewed to polar residues. A disordered region spans residues 1-42 (MSTQIPARQETYDPSQSSGTKTPSHPYDGNPTRSYPKRNAGK). 151–158 (GPTGSGKS) serves as a coordination point for ATP. A DNA-binding region spans residues 419 to 439 (ERNPKLTDLEKLSPPGTFQET).

The protein belongs to the adenoviridae packaging protein 1 family. Homodimer. Part of a genome packaging complex composed of packaging proteins 1, 2 and 3; this complex specifically binds to the packaging sequence on the left end of viral genomic DNA and performs packaging of the viral genome. Interacts with protein 33K.

Its subcellular location is the virion. The protein localises to the host nucleus. It is found in the host nucleoplasm. It localises to the host nucleolus. In terms of biological role, component of the packaging machinery which encapsidates the viral DNA into preformed capsids and transcriptional activator of the viral major late promoter (MLP). Binds, along with packaging proteins 2 and 3, to the specific packaging sequence on the left end of viral genomic DNA and displays ATPase activity thereby providing the power stroke of the packaging machinery. The activity of packaging protein IVa2 is stimulated by protein 33K which acts as a terminase. May be the protein that pumps DNA into the capsid powered by ATP hydrolysis. Specifically binds to the 5'-CG-3' nucleotides of the repeats making up the packaging sequence. Component of the DEF-A and DEF-B transcription factors that bind downstream elements of the major late promoter (MLP), and stimulate transcription from the MLP after initiation of viral DNA replication. DEF-A is a heterodimer packaging proteins 1 and 2 and DEF-B is a homodimer of packaging protein 1. The polypeptide is Packaging protein 1 (Fowl adenovirus A serotype 1 (strain CELO / Phelps) (FAdV-1)).